A 526-amino-acid chain; its full sequence is Lysine--tRNA ligase (526 aa).

Residues Glu431 and Glu438 each coordinate Mg(2+).

It belongs to the class-II aminoacyl-tRNA synthetase family. Homodimer. The cofactor is Mg(2+).

It localises to the cytoplasm. It carries out the reaction tRNA(Lys) + L-lysine + ATP = L-lysyl-tRNA(Lys) + AMP + diphosphate. This is Lysine--tRNA ligase from Chlamydia felis (strain Fe/C-56) (Chlamydophila felis).